The sequence spans 293 residues: Protease HtpX (293 aa).

2 helical membrane-spanning segments follow: residues Ile-4–Leu-24 and Gly-34–Ser-54. His-139 contacts Zn(2+). Glu-140 is an active-site residue. His-143 lines the Zn(2+) pocket. A run of 2 helical transmembrane segments spans residues Val-158–Leu-178 and Met-193–Ile-213. Glu-222 is a Zn(2+) binding site.

Belongs to the peptidase M48B family. Requires Zn(2+) as cofactor.

The protein resides in the cell inner membrane. In Yersinia pseudotuberculosis serotype O:1b (strain IP 31758), this protein is Protease HtpX.